A 518-amino-acid chain; its full sequence is Mitochondrial distribution and morphology protein 34 (518 aa).

Residues 1 to 198 enclose the SMP-LTD domain; it reads MSFKVNWNTL…LPTLIHRLSL (198 aa). Disordered regions lie at residues 335-369 and 491-518; these read SRPK…SEMS and IPDV…PYQV. Residues 336 to 350 show a composition bias toward basic residues; the sequence is RPKRRVIKLGSKKSS. The segment covering 492–506 has biased composition (basic and acidic residues); it reads PDVKSHPGTGRKLDT.

The protein belongs to the MDM34 family. Component of the ER-mitochondria encounter structure (ERMES) or MDM complex, composed of MMM1, MDM10, MDM12 and MDM34.

It localises to the mitochondrion outer membrane. In terms of biological role, component of the ERMES/MDM complex, which serves as a molecular tether to connect the endoplasmic reticulum (ER) and mitochondria. Components of this complex are involved in the control of mitochondrial shape and protein biogenesis, and function in nonvesicular lipid trafficking between the ER and mitochondria. MDM34 is required for the interaction of the ER-resident membrane protein MMM1 and the outer mitochondrial membrane-resident beta-barrel protein MDM10. The polypeptide is Mitochondrial distribution and morphology protein 34 (Meyerozyma guilliermondii (strain ATCC 6260 / CBS 566 / DSM 6381 / JCM 1539 / NBRC 10279 / NRRL Y-324) (Yeast)).